A 258-amino-acid chain; its full sequence is C1q-related factor (258 aa).

Positions 1 to 16 (MLLVLVVLIPVLVSSG) are cleaved as a signal peptide. Positions 39–120 (GPGAGARSDG…PGSGGSGAIS (82 aa)) are disordered. A compositionally biased stretch (low complexity) spans 67–77 (GPQGKPGRTGK). A Collagen-like domain is found at 67 to 115 (GPQGKPGRTGKPGPPGPPGDRGPPGPVGPPGEKGEPGKPGPPGLPGSGG). Residues 78–95 (PGPPGPPGDRGPPGPVGP) are compositionally biased toward pro residues. The C1q domain occupies 125–258 (TTVPRVAFYA…TFSGFIIYSD (134 aa)).

In terms of assembly, interacts with ADGRB3. Forms heterooligomers with C1QL4, when proteins are coexpressed; this interaction does not occur after secretion. As to expression, expressed in brainstem. More abundant in areas of the nervous system involved in motor function, such as the Purkinje cells of the cerebellum, the accessory olivary nucleus, the pons and the red nucleus.

It localises to the secreted. In terms of biological role, may regulate the number of excitatory synapses that are formed on hippocampus neurons. Has no effect on inhibitory synapses. The sequence is that of C1q-related factor (C1ql1) from Mus musculus (Mouse).